Here is a 179-residue protein sequence, read N- to C-terminus: Coiled-coil domain-containing protein 32 (179 aa).

The disordered stretch occupies residues 36 to 65 (DNAFSDSFMDSHPAGESHTAAADSAVQPAG). Positions 75-98 (EVYLASLEKKLRRIKGLNEEVTSK) form a coiled coil. Positions 158–179 (LIPPESQAEKPEAGDKPAAAEQ) are disordered.

As to quaternary structure, interacts with AP2S1; the interaction is direct and mediates association with adaptor protein complex 2 (AP-2).

It is found in the membrane. It localises to the coated pit. In terms of biological role, regulates clathrin-mediated endocytsois of cargos such as transferrin probably through the association and modulation of adaptor protein complex 2 (AP-2). Has a role in ciliogenesis. Required for proper cephalic and left/right axis development. This is Coiled-coil domain-containing protein 32 (Ccdc32) from Mus musculus (Mouse).